We begin with the raw amino-acid sequence, 352 residues long: V-type ATP synthase subunit C (352 aa).

The protein belongs to the V-ATPase V0D/AC39 subunit family.

In terms of biological role, produces ATP from ADP in the presence of a proton gradient across the membrane. In Deinococcus radiodurans (strain ATCC 13939 / DSM 20539 / JCM 16871 / CCUG 27074 / LMG 4051 / NBRC 15346 / NCIMB 9279 / VKM B-1422 / R1), this protein is V-type ATP synthase subunit C (atpC).